A 541-amino-acid polypeptide reads, in one-letter code: uncharacterized protein (541 aa).

The protein localises to the virion. This is an uncharacterized protein from Acanthamoeba polyphaga mimivirus (APMV).